The following is a 72-amino-acid chain: Bowman-Birk type proteinase inhibitor 2a (72 aa).

7 disulfide bridges follow: C8–C61, C9–C24, C12–C57, C14–C22, C31–C38, C35–C50, and C40–C48.

As to quaternary structure, dimer.

Its function is as follows. Inhibits trypsin (IC(50)=0.9 nM) and alpha-chymotrypsin (IC(50)=1.1 nM). The polypeptide is Bowman-Birk type proteinase inhibitor 2a (Lathyrus sativus (White vetchling)).